Consider the following 130-residue polypeptide: Small ribosomal subunit protein uS11 (130 aa).

Positions 108–130 are disordered; that stretch reads IEDVTPIPHDGTGRPGGKRGRRV.

It belongs to the universal ribosomal protein uS11 family. In terms of assembly, part of the 30S ribosomal subunit.

In terms of biological role, located on the platform of the 30S subunit. This chain is Small ribosomal subunit protein uS11, found in Methanothermobacter thermautotrophicus (strain ATCC 29096 / DSM 1053 / JCM 10044 / NBRC 100330 / Delta H) (Methanobacterium thermoautotrophicum).